The following is a 242-amino-acid chain: Protein FsrB (242 aa).

5 helical membrane passes run 29-49, 52-72, 78-95, 100-120, and 160-180; these read LTVY…SVLF, LSET…AGGW, WLCR…PFVL, VSLP…LFYW, and KIAS…LPVT.

Belongs to the AgrB family.

It localises to the cell membrane. Functionally, may be involved in the proteolytic processing of a quorum sensing system signal molecule precursor required for the regulation of the virulence genes for gelatinase (gelE) and a serine protease (sprE). The sequence is that of Protein FsrB (fsrB) from Enterococcus faecalis (strain ATCC 47077 / OG1RF).